A 400-amino-acid polypeptide reads, in one-letter code: MTQFASPVLHSLLDTDAYKLHMQQAVFHHYYDVHVAAEFRCRGDDLLGIYADAIREQVQAMQHLRLQDDEYQWLSALPFFKADYLNWLRKFRFNPEQVTVSNDNGKLDIRLSGPWREVILWEVPLLAVISEMVHRYRSPQADVAQALDTLESKLVDFSALTAGLDMSRFHLMDFGTRRRFSREVQETIVKRLQQESWFVGTSNYDLARRLSLTPMGTQAHEWFQAHQQISPDLANSQRAALAAWLEEYPDQLGIALTDCITMDAFLRDFGVEFASRYQGLRHDSGDPVEWGEKAIAHYEKLGIDPQSKTLVFSDNLDLRKAVELYRHFSSRVQLSFGIGTRLTCDIPQVKPLNIVIKLVECNGKPVAKLSDSPSKTICHDKAFVRALRKAFDLPHIKKAS.

His220 carries the post-translational modification Phosphohistidine; by autocatalysis.

The protein belongs to the NAPRTase family. In terms of processing, transiently phosphorylated on a His residue during the reaction cycle. Phosphorylation strongly increases the affinity for substrates and increases the rate of nicotinate D-ribonucleotide production. Dephosphorylation regenerates the low-affinity form of the enzyme, leading to product release.

It catalyses the reaction nicotinate + 5-phospho-alpha-D-ribose 1-diphosphate + ATP + H2O = nicotinate beta-D-ribonucleotide + ADP + phosphate + diphosphate. It functions in the pathway cofactor biosynthesis; NAD(+) biosynthesis; nicotinate D-ribonucleotide from nicotinate: step 1/1. Catalyzes the synthesis of beta-nicotinate D-ribonucleotide from nicotinate and 5-phospho-D-ribose 1-phosphate at the expense of ATP. This chain is Nicotinate phosphoribosyltransferase, found in Shigella dysenteriae serotype 1 (strain Sd197).